Here is a 196-residue protein sequence, read N- to C-terminus: Probable thymidylate kinase (196 aa).

Residue 7 to 14 (GIDGSGKS) participates in ATP binding.

Belongs to the thymidylate kinase family.

It catalyses the reaction dTMP + ATP = dTDP + ADP. The chain is Probable thymidylate kinase from Natronomonas pharaonis (strain ATCC 35678 / DSM 2160 / CIP 103997 / JCM 8858 / NBRC 14720 / NCIMB 2260 / Gabara) (Halobacterium pharaonis).